The sequence spans 204 residues: Arginine exporter protein ArgO (204 aa).

The next 6 helical transmembrane spans lie at 1-21 (MWAV…PLGP), 37-57 (LMVA…GIFG), 67-87 (LLLG…GWGA), 111-131 (IIAT…DTFV), 154-174 (TASF…APWL), and 179-199 (VQRV…LQLA).

This sequence belongs to the LysE/ArgO transporter (TC 2.A.75) family.

Its subcellular location is the cell inner membrane. It catalyses the reaction L-arginine(in) = L-arginine(out). Functionally, involved in the export of arginine. Important to control the intracellular level of arginine and the correct balance between arginine and lysine. This is Arginine exporter protein ArgO from Pectobacterium atrosepticum (strain SCRI 1043 / ATCC BAA-672) (Erwinia carotovora subsp. atroseptica).